The sequence spans 405 residues: Cysteine desulfurase IscS (405 aa).

Pyridoxal 5'-phosphate-binding positions include 75–76, Asn156, Gln184, and 204–206; these read AT and SAH. Position 207 is an N6-(pyridoxal phosphate)lysine (Lys207). Pyridoxal 5'-phosphate is bound at residue Thr244. Cys329 serves as the catalytic Cysteine persulfide intermediate. Cys329 contacts [2Fe-2S] cluster.

This sequence belongs to the class-V pyridoxal-phosphate-dependent aminotransferase family. NifS/IscS subfamily. In terms of assembly, homodimer. Forms a heterotetramer with IscU, interacts with other sulfur acceptors. Pyridoxal 5'-phosphate is required as a cofactor.

It localises to the cytoplasm. It carries out the reaction (sulfur carrier)-H + L-cysteine = (sulfur carrier)-SH + L-alanine. The protein operates within cofactor biosynthesis; iron-sulfur cluster biosynthesis. Its function is as follows. Master enzyme that delivers sulfur to a number of partners involved in Fe-S cluster assembly, tRNA modification or cofactor biosynthesis. Catalyzes the removal of elemental sulfur atoms from cysteine to produce alanine. Functions as a sulfur delivery protein for Fe-S cluster synthesis onto IscU, an Fe-S scaffold assembly protein, as well as other S acceptor proteins. This is Cysteine desulfurase IscS from Acinetobacter baumannii (strain AB307-0294).